Reading from the N-terminus, the 270-residue chain is Small ribosomal subunit protein uS2 (270 aa).

Positions 207-225 (EEPENTEEAAEEAATEEVV) are enriched in acidic residues. Residues 207–270 (EEPENTEEAA…SESAPAPVAA (64 aa)) form a disordered region. Positions 226–258 (ETAAAEAAAATNADNWDVAPDAGAGAADWAATD) are enriched in low complexity.

This sequence belongs to the universal ribosomal protein uS2 family. Component of the small ribosomal subunit. Mature ribosomes consist of a small (40S) and a large (60S) subunit. The 40S subunit contains about 33 different proteins and 1 molecule of RNA (18S). The 60S subunit contains about 49 different proteins and 3 molecules of RNA (25S, 5.8S and 5S). Interacts with RPS21.

The protein localises to the cytoplasm. Required for the assembly and/or stability of the 40S ribosomal subunit. Required for the processing of the 20S rRNA-precursor to mature 18S rRNA in a late step of the maturation of 40S ribosomal subunits. The polypeptide is Small ribosomal subunit protein uS2 (Yarrowia lipolytica (strain CLIB 122 / E 150) (Yeast)).